We begin with the raw amino-acid sequence, 413 residues long: Multidrug resistance protein MdtA (413 aa).

The first 25 residues, 1–25 (MKNKRRTYFFQFAVLAVVIATAYFA), serve as a signal peptide directing secretion. The disordered stretch occupies residues 394–413 (ANTYDQMDKSKPSNSKVENT).

The protein belongs to the membrane fusion protein (MFP) (TC 8.A.1) family. In terms of assembly, part of a tripartite efflux system composed of MdtA, MdtB and MdtC.

Its subcellular location is the cell inner membrane. This chain is Multidrug resistance protein MdtA, found in Xenorhabdus bovienii (strain SS-2004) (Xenorhabdus nematophila subsp. bovienii).